A 2395-amino-acid polypeptide reads, in one-letter code: Centrosomal protein of 295 kDa (2395 aa).

The necessary for centriole targeting and microtubule association stretch occupies residues 1–540; it reads MKRKVMNGKL…KQADHLEVRP (540 aa). A Phosphoserine modification is found at S13. Coiled coils occupy residues 53–84, 114–148, 209–277, 488–538, and 567–592; these read QRRN…LEKL, AERK…HIKA, DAHL…KRQT, ARHK…HLEV, and QQNR…VLKE. Disordered regions lie at residues 602–643, 660–681, and 735–764; these read LIPD…PVQP, GHIP…SQER, and SDSQ…LMPE. Position 634 is a phosphoserine (S634). Low complexity predominate over residues 735–750; the sequence is SDSQQISSEDSENISS. Residues 817 to 848 adopt a coiled-coil conformation; the sequence is GQLELQKKVLQERQEAQEKLLSCTQKELEEQT. Disordered regions lie at residues 864 to 893, 966 to 986, and 1212 to 1272; these read SLPS…SMDN, ADTQ…KGLL, and VDPE…SKVT. Residues 1219 to 1250 show a composition bias toward polar residues; sequence FQFSPQTQENRSSQQTGFSSFTPSLRQPSCVS. Residues 1444–1488 adopt a coiled-coil conformation; it reads HDDLQALQQQLDVHREAIRSCQDIQEELLLQRLNKLEQRVSSKQI. S1565 carries the phosphoserine modification. A compositionally biased stretch (low complexity) spans 1677–1692; it reads PWGDSSQGSSSGDQPG. Disordered stretches follow at residues 1677 to 1715, 1819 to 1845, 1875 to 1899, 1989 to 2013, and 2354 to 2395; these read PWGD…RASK, SEEE…ETQE, ESFS…GSLS, DLSS…SSEK, and NKTP…SQCI. A compositionally biased stretch (basic and acidic residues) spans 1697–1710; sequence HAEHSGESLGKELS. Positions 1880-1894 are enriched in basic and acidic residues; sequence QTEHQEQESSSKEEE. Positions 2329 to 2395 are ALMS motif; sequence SLGEAFMKRK…TAKRNRSQCI (67 aa). The segment covering 2376 to 2388 has biased composition (basic and acidic residues); sequence HLKEAVSGDETAK.

As to quaternary structure, interacts (via ALMS motif) with microtubules; this interaction is direct.

The protein resides in the cytoplasm. It localises to the cytoskeleton. The protein localises to the microtubule organizing center. Its subcellular location is the centrosome. It is found in the centriole. The protein resides in the spindle. Its function is as follows. Centriole-enriched microtubule-binding protein involved in centriole biogenesis. Essential for the generation of the distal portion of new-born centrioles in a CPAP- and CEP120-mediated elongation dependent manner during the cell cycle S/G2 phase after formation of the initiating cartwheel structure. Required for the recruitment of centriolar proteins, such as POC1B, POC5 and CEP135, into the distal portion of centrioles. Also required for centriole-to-centrosome conversion during mitotic progression, but is dispensable for cartwheel removal or centriole disengagement. Binds to and stabilizes centriolar microtubule. May be involved in ciliogenesis. This is Centrosomal protein of 295 kDa from Rattus norvegicus (Rat).